The following is a 337-amino-acid chain: uncharacterized protein (337 aa).

A MurNAc-LAA domain is found at 3-174 (IAVRGGHNFK…IGKLIAEAIN (172 aa)).

The protein to C.perfringens pIP404 ORF10.

This is an uncharacterized protein from Clostridium perfringens (strain 13 / Type A).